Here is a 570-residue protein sequence, read N- to C-terminus: Phosphoenolpyruvate-protein phosphotransferase (570 aa).

Catalysis depends on H189, which acts as the Tele-phosphohistidine intermediate. R296 and R332 together coordinate phosphoenolpyruvate. Positions 431 and 455 each coordinate Mg(2+). Residues 454–455 and R465 contribute to the phosphoenolpyruvate site; that span reads ND. The active-site Proton donor is C502.

The protein belongs to the PEP-utilizing enzyme family. In terms of assembly, homodimer. Interacts with FloT. The cofactor is Mg(2+).

It localises to the cytoplasm. The protein resides in the membrane raft. The enzyme catalyses L-histidyl-[protein] + phosphoenolpyruvate = N(pros)-phospho-L-histidyl-[protein] + pyruvate. In terms of biological role, general (non sugar-specific) component of the phosphoenolpyruvate-dependent sugar phosphotransferase system (sugar PTS). This major carbohydrate active-transport system catalyzes the phosphorylation of incoming sugar substrates concomitantly with their translocation across the cell membrane. Enzyme I transfers the phosphoryl group from phosphoenolpyruvate (PEP) to the phosphoryl carrier protein (HPr). This Bacillus subtilis (strain 168) protein is Phosphoenolpyruvate-protein phosphotransferase (ptsI).